The primary structure comprises 191 residues: Probable protein adenylyltransferase HI_0977 (191 aa).

The 126-residue stretch at 37–162 folds into the Fido domain; that stretch reads GSTKGLQQIH…NDLEIRFLLQ (126 aa). Residues 67–68, 112–114, Arg118, and Gln145 each bind ATP; these read KG and GNG.

It belongs to the fic family.

The catalysed reaction is L-tyrosyl-[protein] + ATP = O-(5'-adenylyl)-L-tyrosyl-[protein] + diphosphate. The enzyme catalyses L-threonyl-[protein] + ATP = 3-O-(5'-adenylyl)-L-threonyl-[protein] + diphosphate. Functionally, probable adenylyltransferase that mediates the addition of adenosine 5'-monophosphate (AMP) to specific residues of target proteins. This is Probable protein adenylyltransferase HI_0977 from Haemophilus influenzae (strain ATCC 51907 / DSM 11121 / KW20 / Rd).